The sequence spans 698 residues: Potassium-transporting ATPase ATP-binding subunit (698 aa).

A run of 4 helical transmembrane segments spans residues 56–76 (IMFV…VPSL), 82–102 (LWFN…ANFA), 240–260 (TVLI…PLFT), and 271–291 (ILVA…LSAI). Aspartate 324 (4-aspartylphosphate intermediate) is an active-site residue. ATP is bound by residues aspartate 361, glutamate 365, 393–400 (FKAETRMS), and lysine 412. Mg(2+) is bound by residues aspartate 535 and aspartate 539. The next 3 helical transmembrane spans lie at 605–625 (FAII…LNIM), 633–653 (AILS…PLAM), and 677–697 (GGVL…GLFI).

It belongs to the cation transport ATPase (P-type) (TC 3.A.3) family. Type IA subfamily. The system is composed of three essential subunits: KdpA, KdpB and KdpC.

The protein localises to the cell membrane. The enzyme catalyses K(+)(out) + ATP + H2O = K(+)(in) + ADP + phosphate + H(+). Functionally, part of the high-affinity ATP-driven potassium transport (or Kdp) system, which catalyzes the hydrolysis of ATP coupled with the electrogenic transport of potassium into the cytoplasm. This subunit is responsible for energy coupling to the transport system and for the release of the potassium ions to the cytoplasm. In Bacillus cytotoxicus (strain DSM 22905 / CIP 110041 / 391-98 / NVH 391-98), this protein is Potassium-transporting ATPase ATP-binding subunit.